Consider the following 183-residue polypeptide: Adenine phosphoribosyltransferase (183 aa).

The protein belongs to the purine/pyrimidine phosphoribosyltransferase family. As to quaternary structure, homodimer.

It is found in the cytoplasm. The catalysed reaction is AMP + diphosphate = 5-phospho-alpha-D-ribose 1-diphosphate + adenine. It functions in the pathway purine metabolism; AMP biosynthesis via salvage pathway; AMP from adenine: step 1/1. Catalyzes a salvage reaction resulting in the formation of AMP, that is energically less costly than de novo synthesis. This Escherichia fergusonii (strain ATCC 35469 / DSM 13698 / CCUG 18766 / IAM 14443 / JCM 21226 / LMG 7866 / NBRC 102419 / NCTC 12128 / CDC 0568-73) protein is Adenine phosphoribosyltransferase.